A 277-amino-acid polypeptide reads, in one-letter code: Large ribosomal subunit protein uL2 (277 aa).

Disordered regions lie at residues 34-55 (LQPL…RHHG) and 213-277 (WKGI…RKKK).

This sequence belongs to the universal ribosomal protein uL2 family. As to quaternary structure, part of the 50S ribosomal subunit. Forms a bridge to the 30S subunit in the 70S ribosome.

Functionally, one of the primary rRNA binding proteins. Required for association of the 30S and 50S subunits to form the 70S ribosome, for tRNA binding and peptide bond formation. It has been suggested to have peptidyltransferase activity; this is somewhat controversial. Makes several contacts with the 16S rRNA in the 70S ribosome. This is Large ribosomal subunit protein uL2 from Staphylococcus haemolyticus (strain JCSC1435).